The sequence spans 634 residues: Fluorothreonine transaldolase (634 aa).

The pyridoxal 5'-phosphate site is built by Tyr67, His221, and His247. Lys248 carries the N6-(pyridoxal phosphate)lysine modification. Residue Arg375 coordinates pyridoxal 5'-phosphate. The segment at 428-456 (TGDPASAAGPPARERYAPPTAPAGHPARP) is disordered.

Belongs to the SHMT family. Pyridoxal 5'-phosphate serves as cofactor.

It catalyses the reaction fluoroacetaldehyde + L-threonine = 4-fluoro-L-threonine + acetaldehyde. Its function is as follows. Transaldolase that catalyzes the final step in 4-fluorothreonine biosynthesis. Mediates a L-threonine/fluoroaceldehyde to 4-fluoro-L-threonine/acetaldehyde crossover reaction. Can also convert chloroacetaldehyde into 4-chloro-L-threonine. Does not use glycine as a substrate. In Streptantibioticus cattleyicolor (Streptomyces cattleya), this protein is Fluorothreonine transaldolase.